The following is a 275-amino-acid chain: Polyamine aminopropyltransferase (275 aa).

In terms of domain architecture, PABS spans 2 to 235; sequence ELWFTEKQTK…GLWTFTIGSK (234 aa). Position 31 (Gln31) interacts with S-methyl-5'-thioadenosine. His62 and Asp86 together coordinate spermidine. Residues Glu106 and 137–138 contribute to the S-methyl-5'-thioadenosine site; that span reads DG. Asp155 (proton acceptor) is an active-site residue. 155 to 158 is a spermidine binding site; the sequence is DSTE. Position 162 (Pro162) interacts with S-methyl-5'-thioadenosine.

Belongs to the spermidine/spermine synthase family. In terms of assembly, homodimer or homotetramer.

The protein localises to the cytoplasm. The catalysed reaction is S-adenosyl 3-(methylsulfanyl)propylamine + putrescine = S-methyl-5'-thioadenosine + spermidine + H(+). It participates in amine and polyamine biosynthesis; spermidine biosynthesis; spermidine from putrescine: step 1/1. Catalyzes the irreversible transfer of a propylamine group from the amino donor S-adenosylmethioninamine (decarboxy-AdoMet) to putrescine (1,4-diaminobutane) to yield spermidine. In Bacillus mycoides (strain KBAB4) (Bacillus weihenstephanensis), this protein is Polyamine aminopropyltransferase.